A 30-amino-acid chain; its full sequence is MTDAQVFTILAIALVPAVMAALLGSALARS.

Residues 6–26 form a helical membrane-spanning segment; that stretch reads VFTILAIALVPAVMAALLGSA.

The protein belongs to the PsaM family.

It localises to the cellular thylakoid membrane. The chain is Photosystem I reaction center subunit XII from Synechococcus sp. (strain JA-3-3Ab) (Cyanobacteria bacterium Yellowstone A-Prime).